Consider the following 662-residue polypeptide: Bifunctional polymyxin resistance protein ArnA (662 aa).

The segment at 1-307 is formyltransferase ArnAFT; that stretch reads MTSKAVVFAY…ELGLVEGARL (307 aa). Histidine 106 acts as the Proton donor; for formyltransferase activity in catalysis. (6R)-10-formyltetrahydrofolate contacts are provided by residues arginine 116 and 138 to 142; that span reads IERAD. The interval 316–662 is dehydrogenase ArnADH; it reads RRTRVLILGV…EALREREAQA (347 aa). NAD(+) contacts are provided by residues aspartate 349 and 370–371; that span reads DI. UDP-alpha-D-glucuronate contacts are provided by residues alanine 395, tyrosine 400, and 434-435; that span reads TS. Glutamate 436 serves as the catalytic Proton acceptor; for decarboxylase activity. UDP-alpha-D-glucuronate contacts are provided by residues arginine 462, asparagine 493, 527–536, and tyrosine 614; that span reads RLVDGGAQKR. Catalysis depends on arginine 620, which acts as the Proton donor; for decarboxylase activity.

This sequence in the N-terminal section; belongs to the Fmt family. UDP-L-Ara4N formyltransferase subfamily. It in the C-terminal section; belongs to the NAD(P)-dependent epimerase/dehydratase family. UDP-glucuronic acid decarboxylase subfamily. In terms of assembly, homohexamer, formed by a dimer of trimers.

The catalysed reaction is UDP-alpha-D-glucuronate + NAD(+) = UDP-beta-L-threo-pentopyranos-4-ulose + CO2 + NADH. The enzyme catalyses UDP-4-amino-4-deoxy-beta-L-arabinose + (6R)-10-formyltetrahydrofolate = UDP-4-deoxy-4-formamido-beta-L-arabinose + (6S)-5,6,7,8-tetrahydrofolate + H(+). The protein operates within nucleotide-sugar biosynthesis; UDP-4-deoxy-4-formamido-beta-L-arabinose biosynthesis; UDP-4-deoxy-4-formamido-beta-L-arabinose from UDP-alpha-D-glucuronate: step 1/3. It participates in nucleotide-sugar biosynthesis; UDP-4-deoxy-4-formamido-beta-L-arabinose biosynthesis; UDP-4-deoxy-4-formamido-beta-L-arabinose from UDP-alpha-D-glucuronate: step 3/3. Its pathway is bacterial outer membrane biogenesis; lipopolysaccharide biosynthesis. Its function is as follows. Bifunctional enzyme that catalyzes the oxidative decarboxylation of UDP-glucuronic acid (UDP-GlcUA) to UDP-4-keto-arabinose (UDP-Ara4O) and the addition of a formyl group to UDP-4-amino-4-deoxy-L-arabinose (UDP-L-Ara4N) to form UDP-L-4-formamido-arabinose (UDP-L-Ara4FN). The modified arabinose is attached to lipid A and is required for resistance to polymyxin and cationic antimicrobial peptides. The sequence is that of Bifunctional polymyxin resistance protein ArnA from Pseudomonas aeruginosa (strain LESB58).